We begin with the raw amino-acid sequence, 330 residues long: ADP-L-glycero-D-manno-heptose-6-epimerase (330 aa).

NADP(+) contacts are provided by residues Phe11–Ile12, Asp32–Asn33, Lys39, Lys54, Glu75–Ser79, and Asn92. The Proton acceptor role is filled by Tyr139. NADP(+) is bound at residue Lys143. Position 168 (Asn168) interacts with substrate. 2 residues coordinate NADP(+): Val169 and Lys177. Lys177 (proton acceptor) is an active-site residue. Residues Arg179, His186, Phe200–Tyr203, Arg213, and Tyr292 each bind substrate.

The protein belongs to the NAD(P)-dependent epimerase/dehydratase family. HldD subfamily. Homopentamer. Requires NADP(+) as cofactor.

It carries out the reaction ADP-D-glycero-beta-D-manno-heptose = ADP-L-glycero-beta-D-manno-heptose. It participates in nucleotide-sugar biosynthesis; ADP-L-glycero-beta-D-manno-heptose biosynthesis; ADP-L-glycero-beta-D-manno-heptose from D-glycero-beta-D-manno-heptose 7-phosphate: step 4/4. Catalyzes the interconversion between ADP-D-glycero-beta-D-manno-heptose and ADP-L-glycero-beta-D-manno-heptose via an epimerization at carbon 6 of the heptose. This Burkholderia multivorans (strain ATCC 17616 / 249) protein is ADP-L-glycero-D-manno-heptose-6-epimerase.